The primary structure comprises 260 residues: MIEFKDVWFWYDDGKYVLKSINFRFKGGTLAIVGPNGSGKTTLVKMMNGLLKPKKGDVIIDGINTRDKSVAEMSRLVGYVFQNPDAMFFEENVFKEVAFGPRNLGLSEEEVEKRVRWALREVGLEGFEDRSPLELSGGEKQRLAIACILAMKPKYLVLDEPNTGLDERGLRGLINVIRKLREDNHSIILVTHDMELVLEVADEVLLLKDGEIKFFGPVEDFFKLDLRNFSLVEPEIIKIAKELKLRFVRNVDELIKVIGL.

An ABC transporter domain is found at 2–234 (IEFKDVWFWY…DLRNFSLVEP (233 aa)). 34–41 (GPNGSGKT) serves as a coordination point for ATP.

Belongs to the ABC transporter superfamily.

The protein localises to the cell membrane. Its function is as follows. Probably part of an ABC transporter complex. Responsible for energy coupling to the transport system. In Pyrococcus abyssi (strain GE5 / Orsay), this protein is Putative ABC transporter ATP-binding protein PYRAB01300.